Consider the following 78-residue polypeptide: Exodeoxyribonuclease 7 small subunit (78 aa).

This sequence belongs to the XseB family. As to quaternary structure, heterooligomer composed of large and small subunits.

It is found in the cytoplasm. It catalyses the reaction Exonucleolytic cleavage in either 5'- to 3'- or 3'- to 5'-direction to yield nucleoside 5'-phosphates.. Bidirectionally degrades single-stranded DNA into large acid-insoluble oligonucleotides, which are then degraded further into small acid-soluble oligonucleotides. The protein is Exodeoxyribonuclease 7 small subunit of Synechococcus sp. (strain JA-3-3Ab) (Cyanobacteria bacterium Yellowstone A-Prime).